We begin with the raw amino-acid sequence, 825 residues long: Actin filament-associated protein 1-like 2 (825 aa).

Tyrosine 56 carries the phosphotyrosine modification. The disordered stretch occupies residues 62–163 (VNGEQNSASP…SKGKAAPYQW (102 aa)). The span at 80–94 (PLTNGEPSQHSSAPQ) shows a compositional bias: polar residues. At threonine 113 the chain carries Phosphothreonine. PH domains are found at residues 175–271 (DARI…EVSG) and 353–447 (SLET…SESG). Residue serine 408 is modified to Phosphoserine. A Phosphotyrosine modification is found at tyrosine 413. Serine 484 carries the post-translational modification Phosphoserine. Positions 571–614 (TLTVDPKPGTTPEEPHTESPGDPEVQQRQPEVQESSEPIEPTPR) are disordered. Low complexity predominate over residues 593–608 (PEVQQRQPEVQESSEP). Residues 657–754 (AEIKLGKNRT…VKDNLKKAEA (98 aa)) are a coiled coil. The interval 757–801 (VTLGTTVDTTHLDNMSPRPQPKAATPNPPPDSTPVNSASVLKNRP) is disordered. Over residues 759-769 (LGTTVDTTHLD) the composition is skewed to polar residues.

Interacts with SRC. Interacts with LCK when tyrosine phosphorylated. Tyrosine phosphorylated (by SRC).

Its subcellular location is the cytoplasm. Its function is as follows. May play a role in a signaling cascade by enhancing the kinase activity of SRC. Contributes to SRC-regulated transcription activation. This is Actin filament-associated protein 1-like 2 (Afap1l2) from Mus musculus (Mouse).